The following is a 209-amino-acid chain: Na(+)-translocating NADH-quinone reductase subunit D (209 aa).

The next 5 membrane-spanning stretches (helical) occupy residues 42–62 (VVMT…ISLI), 66–86 (IPNS…VIVV), 95–115 (FEIS…CIVM), 131–151 (FMDG…VGFL), and 178–198 (NGLF…IWAL).

Belongs to the NqrDE/RnfAE family. As to quaternary structure, composed of six subunits; NqrA, NqrB, NqrC, NqrD, NqrE and NqrF.

Its subcellular location is the cell inner membrane. The enzyme catalyses a ubiquinone + n Na(+)(in) + NADH + H(+) = a ubiquinol + n Na(+)(out) + NAD(+). In terms of biological role, NQR complex catalyzes the reduction of ubiquinone-1 to ubiquinol by two successive reactions, coupled with the transport of Na(+) ions from the cytoplasm to the periplasm. NqrA to NqrE are probably involved in the second step, the conversion of ubisemiquinone to ubiquinol. This Serratia proteamaculans (strain 568) protein is Na(+)-translocating NADH-quinone reductase subunit D.